Reading from the N-terminus, the 211-residue chain is Octanoyltransferase (211 aa).

In terms of domain architecture, BPL/LPL catalytic spans 32-207; the sequence is PCTYDEIWFV…ELSKFLEIFI (176 aa). Residues 71–78, 138–140, and 151–153 each bind substrate; these read RGGQITYH, SLG, and GLA. C169 (acyl-thioester intermediate) is an active-site residue.

The protein belongs to the LipB family.

Its subcellular location is the cytoplasm. The enzyme catalyses octanoyl-[ACP] + L-lysyl-[protein] = N(6)-octanoyl-L-lysyl-[protein] + holo-[ACP] + H(+). Its pathway is protein modification; protein lipoylation via endogenous pathway; protein N(6)-(lipoyl)lysine from octanoyl-[acyl-carrier-protein]: step 1/2. Functionally, catalyzes the transfer of endogenously produced octanoic acid from octanoyl-acyl-carrier-protein onto the lipoyl domains of lipoate-dependent enzymes. Lipoyl-ACP can also act as a substrate although octanoyl-ACP is likely to be the physiological substrate. The protein is Octanoyltransferase of Buchnera aphidicola subsp. Acyrthosiphon pisum (strain APS) (Acyrthosiphon pisum symbiotic bacterium).